A 292-amino-acid chain; its full sequence is Putative two-component response regulator-like APRR4 (292 aa).

The 116-residue stretch at 43–158 folds into the Response regulatory domain; the sequence is RVLVFDEDPS…DLRIVFKHLV (116 aa). Positions 168–215 are disordered; that stretch reads VTGEAEKAAGEKSSSVGDSTIRNPNKSKRSSCLEAEVNEEDRHDHNDR. Polar residues predominate over residues 179–191; it reads KSSSVGDSTIRNP. The segment at residues 225-275 is a DNA-binding region (myb-like GARP); sequence RVVWDEELHQNFLNAVDFLGLERAVPKKILDVMKVDYISRENVASHLQVTF.

Belongs to the ARR-like family. Binds the target DNA as a monomer.

The protein resides in the nucleus. In terms of biological role, transcriptional activator that binds specifically to the DNA sequence 5'-[AG]GATT-3'. This Arabidopsis thaliana (Mouse-ear cress) protein is Putative two-component response regulator-like APRR4 (APRR4).